Reading from the N-terminus, the 97-residue chain is Coiled-coil domain-containing protein 167 (97 aa).

Residues 10–79 adopt a coiled-coil conformation; the sequence is GVALEIDGLE…LRQENRKNML (70 aa). The helical transmembrane segment at 77–97 threads the bilayer; the sequence is NMLLSVAIFLLLTVIYAYWAL.

Its subcellular location is the membrane. The polypeptide is Coiled-coil domain-containing protein 167 (CCDC167) (Bos taurus (Bovine)).